The following is an 861-amino-acid chain: Leucine--tRNA ligase (861 aa).

The short motif at 42-52 (PYPSGRLHMGH) is the 'HIGH' region element. A 'KMSKS' region motif is present at residues 619–623 (KMSKS). Residue Lys-622 coordinates ATP.

Belongs to the class-I aminoacyl-tRNA synthetase family.

It is found in the cytoplasm. The catalysed reaction is tRNA(Leu) + L-leucine + ATP = L-leucyl-tRNA(Leu) + AMP + diphosphate. This is Leucine--tRNA ligase from Haemophilus ducreyi (strain 35000HP / ATCC 700724).